Reading from the N-terminus, the 181-residue chain is ATP synthase subunit delta (181 aa).

The protein belongs to the ATPase delta chain family. As to quaternary structure, F-type ATPases have 2 components, F(1) - the catalytic core - and F(0) - the membrane proton channel. F(1) has five subunits: alpha(3), beta(3), gamma(1), delta(1), epsilon(1). F(0) has three main subunits: a(1), b(2) and c(10-14). The alpha and beta chains form an alternating ring which encloses part of the gamma chain. F(1) is attached to F(0) by a central stalk formed by the gamma and epsilon chains, while a peripheral stalk is formed by the delta and b chains.

It localises to the cell inner membrane. F(1)F(0) ATP synthase produces ATP from ADP in the presence of a proton or sodium gradient. F-type ATPases consist of two structural domains, F(1) containing the extramembraneous catalytic core and F(0) containing the membrane proton channel, linked together by a central stalk and a peripheral stalk. During catalysis, ATP synthesis in the catalytic domain of F(1) is coupled via a rotary mechanism of the central stalk subunits to proton translocation. Its function is as follows. This protein is part of the stalk that links CF(0) to CF(1). It either transmits conformational changes from CF(0) to CF(1) or is implicated in proton conduction. This Syntrophus aciditrophicus (strain SB) protein is ATP synthase subunit delta.